Reading from the N-terminus, the 1483-residue chain is ABC multidrug transporter atrA (1483 aa).

Positions 1-19 (MASHKKSEDPLVVKDRQEQ) are enriched in basic and acidic residues. A disordered region spans residues 1–92 (MASHKKSEDP…NDPAVDPQGP (92 aa)). N-linked (GlcNAc...) asparagine glycosylation occurs at N32. A compositionally biased stretch (polar residues) spans 71–82 (PTRTSTLATISE). N123 and N322 each carry an N-linked (GlcNAc...) asparagine glycan. An ABC transporter 1 domain is found at 147–398 (FRIGEMMKNR…FERQGWECPQ (252 aa)). 5 consecutive transmembrane segments (helical) span residues 512-532 (TVST…VFYG), 539-559 (GFTA…LIAM), 595-615 (IPVK…LAGL), 620-640 (GQFF…SAVF), and 654-674 (MGLA…VLPV). N718 carries N-linked (GlcNAc...) asparagine glycosylation. The helical transmembrane segment at 759–779 (FGILIAFLVGFMMIYFIATEL) threads the bilayer. Residue N780 is glycosylated (N-linked (GlcNAc...) asparagine). In terms of domain architecture, ABC transporter 2 spans 840–1083 (FTWRDVCYDI…LLNYFESNGA (244 aa)). 876 to 883 (GVSGAGKT) is a binding site for ATP. N-linked (GlcNAc...) asparagine glycans are attached at residues N947 and N1146. 5 consecutive transmembrane segments (helical) span residues 1179–1199 (YIAS…FSFF), 1215–1235 (LFML…LFVT), 1254–1274 (AFLI…GILT), 1293–1313 (LVLL…HMAI), and 1320–1340 (ETAS…CGVM). N1413 carries an N-linked (GlcNAc...) asparagine glycan. A helical transmembrane segment spans residues 1444–1464 (FGLMWVYIVFNIFLATMLYYT). N-linked (GlcNAc...) asparagine glycosylation occurs at N1471.

This sequence belongs to the ABC transporter superfamily. ABCG family. PDR (TC 3.A.1.205) subfamily.

The protein resides in the cell membrane. The catalysed reaction is (R)-miconazole(in) + ATP + H2O = (R)-miconazole(out) + ADP + phosphate + H(+). Functionally, pleiotropic ABC efflux transporter involved in the basal level of azole susceptibility. Confers resistance to miconazole and clotrimazole. The protein is ABC multidrug transporter atrA of Aspergillus oryzae (strain ATCC 42149 / RIB 40) (Yellow koji mold).